A 252-amino-acid polypeptide reads, in one-letter code: Probable transcriptional regulatory protein Npun_R5651 (252 aa).

It belongs to the TACO1 family.

It is found in the cytoplasm. The polypeptide is Probable transcriptional regulatory protein Npun_R5651 (Nostoc punctiforme (strain ATCC 29133 / PCC 73102)).